A 335-amino-acid chain; its full sequence is Replication factor C subunit 4 (335 aa).

56–63 (SGPPGTGK) serves as a coordination point for ATP.

It belongs to the activator 1 small subunits family. Heterotetramer of subunits RFC2, RFC3, RFC4 and RFC5 that can form a complex with RFC1. In terms of tissue distribution, expressed in roots, leaves, shoot apical meristem (SAM), flag leaves and panicles.

Its subcellular location is the nucleus. Functionally, may be involved in DNA replication and thus regulate cell proliferation. The protein is Replication factor C subunit 4 (RFC4) of Oryza sativa subsp. japonica (Rice).